Reading from the N-terminus, the 401-residue chain is Protein KlcB (401 aa).

Positions Ala253–Arg311 are disordered.

This chain is Protein KlcB (klcB), found in Escherichia coli.